The primary structure comprises 1201 residues: Potassium channel subfamily T member 1 (1201 aa).

A disordered region spans residues 1 to 28; the sequence is MARAKLKNSPSESNSHVKTVPPATTEDV. Residues 1 to 92 lie on the Cytoplasmic side of the membrane; sequence MARAKLKNSP…FFIKNQRSSL (92 aa). Residues 8–17 are compositionally biased toward polar residues; the sequence is NSPSESNSHV. The helical transmembrane segment at 93-115 threads the bilayer; it reads RIRLFNFSLKLLTCLLYIVRVLL. The Extracellular portion of the chain corresponds to 116-152; it reads DNPEEGIGCWECEKQNYTLFNQSTKINWSHIFWVDRK. 2 N-linked (GlcNAc...) asparagine glycosylation sites follow: asparagine 131 and asparagine 136. The helical transmembrane segment at 153 to 175 threads the bilayer; that stretch reads LPLWAVQVSIALISFLETMLLIY. The Cytoplasmic segment spans residues 176 to 184; it reads LSYKGNIWE. Residues 185-206 traverse the membrane as a helical segment; the sequence is QIFRISFILEMINTVPFIITIF. Residues 207–216 are Extracellular-facing; sequence WPPLRNLFIP. A helical transmembrane segment spans residues 217 to 229; it reads VFLNCWLAKYALE. The Cytoplasmic segment spans residues 230–249; that stretch reads NMINDLHRAIQRTQSAMFNQ. A helical transmembrane segment spans residues 250–272; that stretch reads VLILICTLLCLVFTGTCGIQHLE. Topologically, residues 273–279 are extracellular; it reads RAGEKLS. Residues 280 to 300 constitute an intramembrane region (pore-forming); the sequence is LFKSFYFCIVTFSTVGYGDVT. Valine 294 and glycine 295 together coordinate K(+). The Extracellular segment spans residues 301–304; that stretch reads PKIW. Residues 305 to 326 form a helical membrane-spanning segment; that stretch reads PSQLLVVIMICVALVVLPLQFE. Residues 327-1201 are Cytoplasmic-facing; that stretch reads ELVYLWMERQ…NPETRDETQL (875 aa). The RCK N-terminal 1 domain maps to 350-486; the sequence is EKHVVLCVSS…FHVKFADHVV (137 aa). The Na(+) site is built by leucine 511, histidine 514, serine 536, and asparagine 538. The Zn(2+) site is built by cysteine 750 and cysteine 751. Arginine 753 and lysine 756 together coordinate K(+). The Na(+) site is built by arginine 753 and lysine 756. Zn(2+) is bound by residues cysteine 758 and histidine 760. Residues asparagine 761, tyrosine 769, and glycine 770 each coordinate K(+). Phenylalanine 771 contacts Na(+). The 141-residue stretch at 773 to 913 folds into the RCK N-terminal 2 domain; that stretch reads NKLIIVSAET…QFRAKDSYSL (141 aa). Residues serine 779, leucine 810, aspartate 812, glycine 834, and aspartate 857 each coordinate K(+). The disordered stretch occupies residues 1175 to 1201; it reads NDGHSRKSSCSNKLGPCNPETRDETQL.

It belongs to the potassium channel family. Calcium-activated (TC 1.A.1.3) subfamily. KCa4.1/KCNT1 sub-subfamily. As to quaternary structure, homotetramer; which constitutes the Na(+)-activated K(+) channel. Interacts with KCNT2; these heterodimer channels differ from the homomers in their unitary conductance, kinetic behavior, subcellular localization, and response to activation of protein kinase C. Phosphorylated by protein kinase C. Phosphorylation of the C-terminal domain increases channel activity.

It localises to the cell membrane. The catalysed reaction is K(+)(in) = K(+)(out). With respect to regulation, activated by high intracellular Na(+). In addition to activation by Na(+), is cooperatively activated by intracellular Cl(-) levels. Inhibited by Zn(2+). Activated upon stimulation of G-protein coupled receptors, such as CHRM1 and GRIA1. Sodium-activated K(+) channel. Acts as an important mediator of neuronal membrane excitability. Contributes to the delayed outward currents. Regulates of neuronal bursting in sensory neurons. Contributes to synaptic development and plasticity. This chain is Potassium channel subfamily T member 1 (KCNT1), found in Gallus gallus (Chicken).